Consider the following 206-residue polypeptide: Small ribosomal subunit protein uS4 (206 aa).

An S4 RNA-binding domain is found at 96 to 158 (SRLDNVVYRM…AKKQLRIQNA (63 aa)).

Belongs to the universal ribosomal protein uS4 family. In terms of assembly, part of the 30S ribosomal subunit. Contacts protein S5. The interaction surface between S4 and S5 is involved in control of translational fidelity.

Functionally, one of the primary rRNA binding proteins, it binds directly to 16S rRNA where it nucleates assembly of the body of the 30S subunit. Its function is as follows. With S5 and S12 plays an important role in translational accuracy. The chain is Small ribosomal subunit protein uS4 from Francisella tularensis subsp. mediasiatica (strain FSC147).